The following is an 802-amino-acid chain: LPS-assembly protein LptD (802 aa).

An N-terminal signal peptide occupies residues 1–29 (MARLFSLKPLVLALGFCFGTHCAAADAVA).

It belongs to the LptD family. Component of the lipopolysaccharide transport and assembly complex. Interacts with LptE and LptA.

It localises to the cell outer membrane. In terms of biological role, together with LptE, is involved in the assembly of lipopolysaccharide (LPS) at the surface of the outer membrane. This chain is LPS-assembly protein LptD, found in Neisseria meningitidis serogroup A / serotype 4A (strain DSM 15465 / Z2491).